The following is a 204-amino-acid chain: Large ribosomal subunit protein eL15 (204 aa).

Residues 172–182 (RGLRGRGHLHN) are compositionally biased toward basic residues. The segment at 172 to 204 (RGLRGRGHLHNKAPPSRRANWKRNQTLSLPRYR) is disordered. The span at 193–204 (KRNQTLSLPRYR) shows a compositional bias: polar residues.

Belongs to the eukaryotic ribosomal protein eL15 family.

This Petunia hybrida (Petunia) protein is Large ribosomal subunit protein eL15 (RPL15).